A 662-amino-acid chain; its full sequence is Glycogen debranching enzyme (662 aa).

The active-site Nucleophile is the aspartate 338. The active-site Proton donor is glutamate 373.

This sequence belongs to the glycosyl hydrolase 13 family.

The catalysed reaction is Hydrolysis of (1-&gt;6)-alpha-D-glucosidic linkages to branches with degrees of polymerization of three or four glucose residues in limit dextrin.. Its pathway is glycan degradation; glycogen degradation. Removes maltotriose and maltotetraose chains that are attached by 1,6-alpha-linkage to the limit dextrin main chain, generating a debranched limit dextrin. The polypeptide is Glycogen debranching enzyme (Yersinia pseudotuberculosis serotype O:1b (strain IP 31758)).